The sequence spans 504 residues: Maturase K (504 aa).

The protein belongs to the intron maturase 2 family. MatK subfamily.

Its subcellular location is the plastid. The protein localises to the chloroplast. In terms of biological role, usually encoded in the trnK tRNA gene intron. Probably assists in splicing its own and other chloroplast group II introns. In Quercus gemelliflora (Pasang hiris), this protein is Maturase K.